Consider the following 308-residue polypeptide: Probable manganese-dependent inorganic pyrophosphatase (308 aa).

Mn(2+) is bound by residues His9, Asp13, Asp15, Asp75, His97, and Asp149.

It belongs to the PPase class C family. It depends on Mn(2+) as a cofactor.

Its subcellular location is the cytoplasm. It carries out the reaction diphosphate + H2O = 2 phosphate + H(+). This chain is Probable manganese-dependent inorganic pyrophosphatase, found in Listeria welshimeri serovar 6b (strain ATCC 35897 / DSM 20650 / CCUG 15529 / CIP 8149 / NCTC 11857 / SLCC 5334 / V8).